Here is a 165-residue protein sequence, read N- to C-terminus: Nucleotide-binding protein TGRD_519 (165 aa).

The protein belongs to the YajQ family.

In terms of biological role, nucleotide-binding protein. The protein is Nucleotide-binding protein TGRD_519 of Endomicrobium trichonymphae.